The primary structure comprises 228 residues: Isoprenyl transferase (228 aa).

D9 is an active-site residue. D9 contacts Mg(2+). Residues 10–13, W14, R22, H26, and 54–56 each bind substrate; these read GNGR and STE. The active-site Proton acceptor is N57. Residues W58, R60, R175, and 181–183 contribute to the substrate site; that span reads RMS. Residue E194 participates in Mg(2+) binding.

The protein belongs to the UPP synthase family. Homodimer. It depends on Mg(2+) as a cofactor.

Catalyzes the condensation of isopentenyl diphosphate (IPP) with allylic pyrophosphates generating different type of terpenoids. This chain is Isoprenyl transferase, found in Treponema pallidum (strain Nichols).